The following is a 134-amino-acid chain: Protein PsiB (134 aa).

Its function is as follows. Could be involved directly or indirectly in exopolysaccharide synthesis. This chain is Protein PsiB (psiB), found in Rhizobium leguminosarum bv. phaseoli.